The sequence spans 437 residues: FK506-binding protein 3 (437 aa).

Acidic residues-rich tracts occupy residues 73 to 90, 106 to 131, and 179 to 220; these read DIEA…EEEE, EEEE…EDVS, and ADED…DASD. 2 disordered regions span residues 73 to 132 and 169 to 349; these read DIEA…DVSE and HLTG…QTAK. 2 stretches are compositionally biased toward basic and acidic residues: residues 256 to 270 and 292 to 324; these read KKED…KDLE and AKKE…EASK. A PPIase FKBP-type domain is found at 351 to 437; it reads GNKVGIRYIG…TFDIKLVSIK (87 aa).

This sequence belongs to the FKBP-type PPIase family. FKBP3/4 subfamily.

Its subcellular location is the nucleus. It localises to the nucleolus. The catalysed reaction is [protein]-peptidylproline (omega=180) = [protein]-peptidylproline (omega=0). Inhibited by both FK506 and rapamycin. Its function is as follows. PPIases accelerate the folding of proteins. It catalyzes the cis-trans isomerization of proline imidic peptide bonds in oligopeptides. In Debaryomyces hansenii (strain ATCC 36239 / CBS 767 / BCRC 21394 / JCM 1990 / NBRC 0083 / IGC 2968) (Yeast), this protein is FK506-binding protein 3 (FPR3).